The chain runs to 638 residues: Epithelial sodium channel subunit delta (638 aa).

Basic and acidic residues predominate over residues Met-1 to Ala-13. Positions Met-1 to Glu-47 are disordered. Topologically, residues Met-1–Thr-86 are cytoplasmic. Residues Pro-28–Pro-41 are compositionally biased toward pro residues. A helical membrane pass occupies residues Ser-87 to Phe-107. The Extracellular segment spans residues Glu-108–Ser-530. N-linked (GlcNAc...) asparagine glycans are attached at residues Asn-166 and Asn-384. A helical transmembrane segment spans residues Leu-531–Leu-551. Residues Asp-552–Thr-638 lie on the Cytoplasmic side of the membrane. The interval Arg-574–Met-613 is disordered.

It belongs to the amiloride-sensitive sodium channel (TC 1.A.6) family. SCNN1D subfamily. In terms of assembly, can form an alternative heterotrimeric epithelial sodium channel (ENaC), composed of a delta (SCNN1D), beta (SCNN1B), and gamma (SCNN1G) subunit, where the delta (SCNN1D) subunit replaces the alpha (SCNN1A) subunit.

Its subcellular location is the apical cell membrane. The enzyme catalyses Na(+)(in) = Na(+)(out). With respect to regulation, originally identified and characterized by its inhibition by the diuretic drug amiloride. In terms of biological role, potential alternative pore-forming subunit of the epithelial sodium channel (ENaC), capable of replacing the alpha/SCNN1A subunit, creating a more active channel with distinct properties. ENaC functions in epithelial tissues, where it facilitates the electrodiffusion of sodium ions from the extracellular fluid through the apical membrane of cells, with water following osmotically, regulating sodium balance and fluid homeostasis. This subunit could also function independently as a sodium channel or assemble into other tissue-specific heterotrimeric sodium channels. The sequence is that of Epithelial sodium channel subunit delta from Pan troglodytes (Chimpanzee).